Reading from the N-terminus, the 345-residue chain is NADPH dehydrogenase (345 aa).

Residue 23–26 participates in FMN binding; it reads SPMC. Tyrosine 28 lines the substrate pocket. Residues alanine 60 and glutamine 102 each contribute to the FMN site. 164 to 167 is a substrate binding site; it reads HGAH. FMN contacts are provided by residues arginine 215 and 307–308; that span reads GR.

This sequence belongs to the NADH:flavin oxidoreductase/NADH oxidase family. NamA subfamily. As to quaternary structure, homotetramer. Requires FMN as cofactor.

The enzyme catalyses A + NADPH + H(+) = AH2 + NADP(+). Functionally, catalyzes the reduction of the double bond of an array of alpha,beta-unsaturated aldehydes and ketones. It also reduces the nitro group of nitroester and nitroaromatic compounds. It could have a role in detoxification processes. In Bacillus thuringiensis (strain Al Hakam), this protein is NADPH dehydrogenase.